A 382-amino-acid chain; its full sequence is tRNA-specific 2-thiouridylase MnmA (382 aa).

ATP is bound by residues 34–41 (AMSGGVDS) and leucine 60. Cysteine 128 serves as the catalytic Nucleophile. Residues cysteine 128 and cysteine 224 are joined by a disulfide bond. Glycine 152 is a binding site for ATP. An interaction with tRNA region spans residues 174–176 (RDQ). Cysteine 224 (cysteine persulfide intermediate) is an active-site residue.

Belongs to the MnmA/TRMU family.

It localises to the cytoplasm. It carries out the reaction S-sulfanyl-L-cysteinyl-[protein] + uridine(34) in tRNA + AH2 + ATP = 2-thiouridine(34) in tRNA + L-cysteinyl-[protein] + A + AMP + diphosphate + H(+). Functionally, catalyzes the 2-thiolation of uridine at the wobble position (U34) of tRNA, leading to the formation of s(2)U34. This is tRNA-specific 2-thiouridylase MnmA from Sphingopyxis alaskensis (strain DSM 13593 / LMG 18877 / RB2256) (Sphingomonas alaskensis).